Here is a 402-residue protein sequence, read N- to C-terminus: Large ribosomal subunit protein uL3 (402 aa).

The tract at residues 1 to 35 is disordered; it reads MSHRKFSAPRHGSMGFTPKKRSKRHRGKVKAFPKD. Residues 18 to 31 are compositionally biased toward basic residues; that stretch reads PKKRSKRHRGKVKA.

Belongs to the universal ribosomal protein uL3 family.

The protein localises to the cytoplasm. In terms of biological role, the L3 protein is a component of the large subunit of cytoplasmic ribosomes. The protein is Large ribosomal subunit protein uL3 (RPL3) of Toxocara canis (Canine roundworm).